The following is a 333-amino-acid chain: D-2-hydroxyacid dehydrogenase (NAD+) (333 aa).

Residue Y100 coordinates 4-methyl-2-oxopentanoate. 8 residues coordinate NAD(+): H155, I156, D175, V205, N211, T232, R234, and D258. Residue R234 is part of the active site. The active site involves E263. H295 contributes to the 4-methyl-2-oxopentanoate binding site. H295 functions as the Proton donor in the catalytic mechanism.

It belongs to the D-isomer specific 2-hydroxyacid dehydrogenase family. Homodimer.

It catalyses the reaction a (2R)-2-hydroxycarboxylate + NAD(+) = a 2-oxocarboxylate + NADH + H(+). The enzyme catalyses (2R)-hydroxy-4-methylpentanoate + NAD(+) = 4-methyl-2-oxopentanoate + NADH + H(+). It carries out the reaction (R)-3-phenyllactate + NAD(+) = 3-phenylpyruvate + NADH + H(+). Its activity is regulated as follows. Completely inhibited In the presence of 0.1 mM Hg(2+). No influence on the activity could be detected with Mg(2+) and Ca(2+) and only very weak effects with Cd(2+), Co(2+) and Mn(2+). Reducing agents and thiol group reagents do not affect catalytic activity. Functionally, catalyzes the NADH-dependent reversible reduction of various 2-ketocarboxylic acids to the corresponding D-2-hydroxycarboxylic acids. In vitro can use various substrates, including 4-methyl-2-oxopentanoate (2-oxoisocaproate), 2-oxopentanoate, 2-oxohexanoate and phenylpyruvate. The polypeptide is D-2-hydroxyacid dehydrogenase (NAD+) (Lacticaseibacillus paracasei (Lactobacillus paracasei)).